Here is an 890-residue protein sequence, read N- to C-terminus: DNA mismatch repair protein MutS (890 aa).

A compositionally biased stretch (basic and acidic residues) spans 1-13 (MDKGINLQNDKEP). The tract at residues 1–23 (MDKGINLQNDKEPSPMAEGNPAD) is disordered. 649–656 (GPNMGGKS) contributes to the ATP binding site.

The protein belongs to the DNA mismatch repair MutS family.

This protein is involved in the repair of mismatches in DNA. It is possible that it carries out the mismatch recognition step. This protein has a weak ATPase activity. The polypeptide is DNA mismatch repair protein MutS (Paracidovorax citrulli (strain AAC00-1) (Acidovorax citrulli)).